Reading from the N-terminus, the 218-residue chain is ATP-dependent dethiobiotin synthetase BioD (218 aa).

10–15 is a binding site for ATP; the sequence is NAGKTT. Threonine 14 is a binding site for Mg(2+). Lysine 35 is a catalytic residue. Threonine 39 contacts substrate. Histidine 52 and glutamate 116 together coordinate Mg(2+). ATP contacts are provided by residues 116 to 119 and 176 to 177; these read EGAG and LR.

Belongs to the dethiobiotin synthetase family. Homodimer. Mg(2+) serves as cofactor.

The protein resides in the cytoplasm. It carries out the reaction (7R,8S)-7,8-diammoniononanoate + CO2 + ATP = (4R,5S)-dethiobiotin + ADP + phosphate + 3 H(+). The protein operates within cofactor biosynthesis; biotin biosynthesis; biotin from 7,8-diaminononanoate: step 1/2. In terms of biological role, catalyzes a mechanistically unusual reaction, the ATP-dependent insertion of CO2 between the N7 and N8 nitrogen atoms of 7,8-diaminopelargonic acid (DAPA, also called 7,8-diammoniononanoate) to form a ureido ring. The protein is ATP-dependent dethiobiotin synthetase BioD of Helicobacter pylori (strain Shi470).